The sequence spans 326 residues: Transmembrane protein 255B (326 aa).

A run of 4 helical transmembrane segments spans residues 26–46, 55–75, 85–105, and 200–220; these read LWFV…GLAA, VGGY…IIGI, LVAA…CAIV, and AVLN…LGAF. Residues 284–326 form a disordered region; sequence LASSEDLQPPSPSSSGSGLPGQAPPCYAPTYFPPGEKPPPYAP. Residues 305 to 326 show a composition bias toward pro residues; the sequence is QAPPCYAPTYFPPGEKPPPYAP.

It belongs to the TMEM255 family.

It localises to the membrane. This chain is Transmembrane protein 255B (TMEM255B), found in Homo sapiens (Human).